A 1060-amino-acid chain; its full sequence is MLNPSTSDIHTSPTAVGNGRKRPHPIADSGSAMPSDPSAQQLPHPANESAAIPSIASSSSFRNVSACNRCRQRKNRCDQRLPRCQACEKAGVRCVGYDPITKREIPRSYVYFLESRVAYLEKVLMDNGIEYNEAVAFDEEEAVKIEAGYEAYAGSANGPAAGEIAAQDGSNDKSVRIKKEKNGPLGLEKASRYDHDPEVKQDSDAEDGWRIQNLVSNIGMVSVQGTSDPRYLGSTSGISFARVVFAAVKSSVPGNSSERGPSRPKERLPHSATGTEGSTTRDSFFGLQTRPMMKCAAFPDRELAERLADLYFEHANPQIPIVHRVDFMELLDRTYSVDEKSRSPRSLYFLNIVFAIGSGIIFEDKPAEDQKEGRDHSPSATKRQRLSSRQYQPEEYHASAIVHLESFLSTSPTTDGFGALEELQAVLLLASFALLRPVAPGLWYIVGVAMRLAVDLGLHYEDGAGIDGPENDNMNRTNNKDGEKAKLRIDDHERGRREWVRDFRRRLWWCCYSFDRLVSCCVGRPFGISDQAISTEFPSILEDKYITKSGIIKAPEGAPSYKHSAFHYFKLRVLQSEIQDVLQHQQARFARQRGPPGARSFMRLDVVSPFLQGFDSFRSWRRDVDRRLLEWKNSAPMPSENGVRFPLEFLELNYWQAVIMLYQQSLTVPAELADELSPAEDVSSPSFSQVEEDEHDIYYKVAEAGQKVIRIYRQMHRVRLVNYTYLATHHIFMAGISFLYAIWHSPYVRSRLTLDEVDFTVLAATSVLRDLMHKCPPAEACRDAFERMSKATVEMSLSTTGFGPQVELNRVQTSTSGSRQFNATQSRSRPYSRQQAEQRQRQSASRRQLQMRQSRPLPRFDMNLEDLFGDNRAVAERQGSGGMGKLAQPYPVSETSDPNFARPQSHRNPSMEYYGPFENPVSPQQPQPQPRYYYNNSPQQSGSPGSVVAASGIPPYQVTPTEQENPSGMGLDYLDYDPTGIERQLSLGSEENSDFKFQGGAQSLGHGAGHNFGIDLGFGMAVDFQHDWSENANYDLLEGYFFGGAGATGPGHGHGHGSGI.

Polar residues predominate over residues 1 to 15; sequence MLNPSTSDIHTSPTA. The interval 1–48 is disordered; the sequence is MLNPSTSDIHTSPTAVGNGRKRPHPIADSGSAMPSDPSAQQLPHPANE. The segment at residues 67–94 is a DNA-binding region (zn(2)-C6 fungal-type); the sequence is CNRCRQRKNRCDQRLPRCQACEKAGVRC. Disordered regions lie at residues 163 to 207, 251 to 282, 367 to 391, 811 to 862, and 877 to 969; these read EIAA…DAED, SVPGNSSERGPSRPKERLPHSATGTEGSTTRD, AEDQKEGRDHSPSATKRQRLSSRQY, VQTS…RFDM, and RQGS…PSGM. 3 stretches are compositionally biased toward basic and acidic residues: residues 170–182, 189–207, and 260–269; these read SNDKSVRIKKEKN, KASRYDHDPEVKQDSDAED, and GPSRPKERLP. Over residues 272–282 the composition is skewed to polar residues; it reads ATGTEGSTTRD. The segment covering 367–377 has biased composition (basic and acidic residues); it reads AEDQKEGRDHS. Residues 811 to 831 are compositionally biased toward polar residues; sequence VQTSTSGSRQFNATQSRSRPY. 2 stretches are compositionally biased toward low complexity: residues 832-859 and 930-952; these read SRQQAEQRQRQSASRRQLQMRQSRPLPR and PRYYYNNSPQQSGSPGSVVAASG.

The protein resides in the nucleus. In terms of biological role, mediates the induction of a number of unlinked genes involved in purine utilization. Binds to the consensus sequence 5'-TCGGNNNNNNCCGA-3'. The protein is Positive regulator of purine utilization (uaY) of Emericella nidulans (strain FGSC A4 / ATCC 38163 / CBS 112.46 / NRRL 194 / M139) (Aspergillus nidulans).